We begin with the raw amino-acid sequence, 230 residues long: Uracil-DNA glycosylase (230 aa).

Aspartate 71 functions as the Proton acceptor in the catalytic mechanism.

It belongs to the uracil-DNA glycosylase (UDG) superfamily. UNG family.

The protein localises to the cytoplasm. It carries out the reaction Hydrolyzes single-stranded DNA or mismatched double-stranded DNA and polynucleotides, releasing free uracil.. Its function is as follows. Excises uracil residues from the DNA which can arise as a result of misincorporation of dUMP residues by DNA polymerase or due to deamination of cytosine. This chain is Uracil-DNA glycosylase, found in Nocardioides sp. (strain ATCC BAA-499 / JS614).